Consider the following 198-residue polypeptide: FMN-dependent NADH:quinone oxidoreductase (198 aa).

Residues S10, 16 to 18 (SQS), 94 to 97 (MYNF), and 138 to 141 (TRGG) each bind FMN.

The protein belongs to the azoreductase type 1 family. In terms of assembly, homodimer. FMN serves as cofactor.

It carries out the reaction 2 a quinone + NADH + H(+) = 2 a 1,4-benzosemiquinone + NAD(+). The catalysed reaction is N,N-dimethyl-1,4-phenylenediamine + anthranilate + 2 NAD(+) = 2-(4-dimethylaminophenyl)diazenylbenzoate + 2 NADH + 2 H(+). In terms of biological role, quinone reductase that provides resistance to thiol-specific stress caused by electrophilic quinones. Also exhibits azoreductase activity. Catalyzes the reductive cleavage of the azo bond in aromatic azo compounds to the corresponding amines. The protein is FMN-dependent NADH:quinone oxidoreductase of Shewanella sp. (strain MR-4).